Here is a 567-residue protein sequence, read N- to C-terminus: Glutathione/L-cysteine transport system ATP-binding/permease protein CydC (567 aa).

The next 6 helical transmembrane spans lie at 14 to 34 (ILTLITCLTLIQTAAIIMQAE), 44 to 64 (FNGKGITSLLPVIGFFLIAFI), 130 to 150 (FLPKMVSMAIVPAAVVIYVFF), 156 to 176 (AIILVAAMPILIIFMILLGLV), 240 to 260 (SFALDFFTMLSVATVAVFLGL), and 266 to 286 (DILLGPALTALILAPEYFLPV). Positions 17 to 298 (LITCLTLIQT…VGNDYHATLN (282 aa)) constitute an ABC transmembrane type-1 domain. One can recognise an ABC transporter domain in the interval 321 to 561 (LQLEAWSDQD…NGVYTKLVKA (241 aa)). Position 360-367 (360-367 (GASGAGKS)) interacts with ATP.

Belongs to the ABC transporter superfamily. Cysteine exporter (TC 3.A.1.129.1) family. Forms a heterodimer with CydD.

The protein resides in the cell membrane. It catalyses the reaction L-cysteine(in) + ATP + H2O = L-cysteine(out) + ADP + phosphate + H(+). The catalysed reaction is glutathione(in) + ATP + H2O = glutathione(out) + ADP + phosphate + H(+). Its function is as follows. Part of the ABC transporter complex CydDC that exports the reduced low-molecular-weight thiols cysteine and glutathione from the cell. Export of these thiol-containing redox-active molecules may be crucial for redox homeostasis, permitting correct assembly of various respiratory complexes and formation of correct disulfide bonds in secreted proteins. CydC contains transmembrane domains (TMD), which form a pore in the membrane, and an ATP-binding domain (NBD), which is responsible for energy generation. This Bacillus subtilis (strain 168) protein is Glutathione/L-cysteine transport system ATP-binding/permease protein CydC (cydC).